The sequence spans 529 residues: Retinoic acid-induced protein 2 (529 aa).

Disordered regions lie at residues 1–21 (MDDLQSQNLSMDMTDSPPTLA) and 400–419 (SHSSNSNGTEMVSQPSHPGS). Positions 407 to 416 (GTEMVSQPSH) are enriched in polar residues.

This Mus musculus (Mouse) protein is Retinoic acid-induced protein 2 (Rai2).